The following is a 272-amino-acid chain: 5'-nucleotidase SurE (272 aa).

A divalent metal cation contacts are provided by aspartate 8, aspartate 9, serine 39, and asparagine 96.

This sequence belongs to the SurE nucleotidase family. A divalent metal cation serves as cofactor.

It is found in the cytoplasm. It catalyses the reaction a ribonucleoside 5'-phosphate + H2O = a ribonucleoside + phosphate. Its function is as follows. Nucleotidase that shows phosphatase activity on nucleoside 5'-monophosphates. The protein is 5'-nucleotidase SurE of Heliobacterium modesticaldum (strain ATCC 51547 / Ice1).